Consider the following 468-residue polypeptide: Probable Xaa-Pro aminopeptidase PEPP (468 aa).

4 residues coordinate Mn(2+): aspartate 264, aspartate 275, glutamate 398, and glutamate 438.

It belongs to the peptidase M24B family. The cofactor is Mn(2+).

The enzyme catalyses Release of any N-terminal amino acid, including proline, that is linked to proline, even from a dipeptide or tripeptide.. In terms of biological role, catalyzes the removal of a penultimate prolyl residue from the N-termini of peptides. This is Probable Xaa-Pro aminopeptidase PEPP (PEPP) from Paracoccidioides brasiliensis (strain Pb18).